Reading from the N-terminus, the 385-residue chain is 1-deoxy-D-xylulose 5-phosphate reductoisomerase (385 aa).

T11, G12, S13, I14, N39, and N123 together coordinate NADPH. K124 lines the 1-deoxy-D-xylulose 5-phosphate pocket. E125 is an NADPH binding site. D149 contributes to the Mn(2+) binding site. Residues S150, E151, S174, and H197 each contribute to the 1-deoxy-D-xylulose 5-phosphate site. Residue E151 coordinates Mn(2+). Residue G203 coordinates NADPH. Positions 210, 215, 216, and 219 each coordinate 1-deoxy-D-xylulose 5-phosphate. E219 contacts Mn(2+).

The protein belongs to the DXR family. It depends on Mg(2+) as a cofactor. The cofactor is Mn(2+).

It carries out the reaction 2-C-methyl-D-erythritol 4-phosphate + NADP(+) = 1-deoxy-D-xylulose 5-phosphate + NADPH + H(+). Its pathway is isoprenoid biosynthesis; isopentenyl diphosphate biosynthesis via DXP pathway; isopentenyl diphosphate from 1-deoxy-D-xylulose 5-phosphate: step 1/6. In terms of biological role, catalyzes the NADPH-dependent rearrangement and reduction of 1-deoxy-D-xylulose-5-phosphate (DXP) to 2-C-methyl-D-erythritol 4-phosphate (MEP). In Porphyromonas gingivalis (strain ATCC 33277 / DSM 20709 / CIP 103683 / JCM 12257 / NCTC 11834 / 2561), this protein is 1-deoxy-D-xylulose 5-phosphate reductoisomerase.